The sequence spans 70 residues: Large ribosomal subunit protein eL38 (70 aa).

Belongs to the eukaryotic ribosomal protein eL38 family.

The protein is Large ribosomal subunit protein eL38 (rpl-38) of Ostertagia ostertagi (Brown stomach worm).